The sequence spans 344 residues: Probable dual-specificity RNA methyltransferase RlmN (344 aa).

E83 acts as the Proton acceptor in catalysis. In terms of domain architecture, Radical SAM core spans 89-323 (YLDRKTICVS…VSVRRSRGKD (235 aa)). A disulfide bridge connects residues C96 and C328. Residues C103, C107, and C110 each coordinate [4Fe-4S] cluster. Residues 153–154 (GE), S185, 209–211 (SLH), and N285 contribute to the S-adenosyl-L-methionine site. C328 functions as the S-methylcysteine intermediate in the catalytic mechanism.

This sequence belongs to the radical SAM superfamily. RlmN family. [4Fe-4S] cluster serves as cofactor.

It is found in the cytoplasm. The catalysed reaction is adenosine(2503) in 23S rRNA + 2 reduced [2Fe-2S]-[ferredoxin] + 2 S-adenosyl-L-methionine = 2-methyladenosine(2503) in 23S rRNA + 5'-deoxyadenosine + L-methionine + 2 oxidized [2Fe-2S]-[ferredoxin] + S-adenosyl-L-homocysteine. It catalyses the reaction adenosine(37) in tRNA + 2 reduced [2Fe-2S]-[ferredoxin] + 2 S-adenosyl-L-methionine = 2-methyladenosine(37) in tRNA + 5'-deoxyadenosine + L-methionine + 2 oxidized [2Fe-2S]-[ferredoxin] + S-adenosyl-L-homocysteine. In terms of biological role, specifically methylates position 2 of adenine 2503 in 23S rRNA and position 2 of adenine 37 in tRNAs. The chain is Probable dual-specificity RNA methyltransferase RlmN from Deinococcus geothermalis (strain DSM 11300 / CIP 105573 / AG-3a).